Consider the following 444-residue polypeptide: 3-phosphoshikimate 1-carboxyvinyltransferase (444 aa).

Residues K24, S25, and R29 each contribute to the 3-phosphoshikimate site. K24 lines the phosphoenolpyruvate pocket. Residues G97 and R125 each contribute to the phosphoenolpyruvate site. Positions 170, 172, 318, and 345 each coordinate 3-phosphoshikimate. Phosphoenolpyruvate is bound at residue Q172. D318 functions as the Proton acceptor in the catalytic mechanism. Phosphoenolpyruvate-binding residues include R349 and R391.

The protein belongs to the EPSP synthase family. In terms of assembly, monomer.

Its subcellular location is the cytoplasm. The catalysed reaction is 3-phosphoshikimate + phosphoenolpyruvate = 5-O-(1-carboxyvinyl)-3-phosphoshikimate + phosphate. It functions in the pathway metabolic intermediate biosynthesis; chorismate biosynthesis; chorismate from D-erythrose 4-phosphate and phosphoenolpyruvate: step 6/7. Its function is as follows. Catalyzes the transfer of the enolpyruvyl moiety of phosphoenolpyruvate (PEP) to the 5-hydroxyl of shikimate-3-phosphate (S3P) to produce enolpyruvyl shikimate-3-phosphate and inorganic phosphate. This is 3-phosphoshikimate 1-carboxyvinyltransferase from Halorhodospira halophila (strain DSM 244 / SL1) (Ectothiorhodospira halophila (strain DSM 244 / SL1)).